The primary structure comprises 284 residues: Pheromone-regulated membrane protein 4 (284 aa).

Residues 20 to 38 (IISLTLVLLGVFSFLLLTW) traverse the membrane as a helical segment. One can recognise a Glutaredoxin domain in the interval 157-272 (RTDFLDIIRT…PLLKSEARGN (116 aa)).

The protein resides in the membrane. This is Pheromone-regulated membrane protein 4 (PRM4) from Saccharomyces cerevisiae (strain ATCC 204508 / S288c) (Baker's yeast).